A 316-amino-acid polypeptide reads, in one-letter code: Ribosomal protein L11 methyltransferase (316 aa).

S-adenosyl-L-methionine is bound by residues threonine 157, glycine 178, aspartate 200, and asparagine 243.

This sequence belongs to the methyltransferase superfamily. PrmA family.

The protein resides in the cytoplasm. It carries out the reaction L-lysyl-[protein] + 3 S-adenosyl-L-methionine = N(6),N(6),N(6)-trimethyl-L-lysyl-[protein] + 3 S-adenosyl-L-homocysteine + 3 H(+). In terms of biological role, methylates ribosomal protein L11. The chain is Ribosomal protein L11 methyltransferase from Streptococcus pneumoniae (strain ATCC 700669 / Spain 23F-1).